A 113-amino-acid polypeptide reads, in one-letter code: Large ribosomal subunit protein eL31A (113 aa).

Belongs to the eukaryotic ribosomal protein eL31 family. In terms of assembly, component of the large ribosomal subunit (LSU). Mature yeast ribosomes consist of a small (40S) and a large (60S) subunit. The 40S small subunit contains 1 molecule of ribosomal RNA (18S rRNA) and 33 different proteins (encoded by 57 genes). The large 60S subunit contains 3 rRNA molecules (25S, 5.8S and 5S rRNA) and 46 different proteins (encoded by 81 genes).

Its subcellular location is the cytoplasm. In terms of biological role, component of the ribosome, a large ribonucleoprotein complex responsible for the synthesis of proteins in the cell. The small ribosomal subunit (SSU) binds messenger RNAs (mRNAs) and translates the encoded message by selecting cognate aminoacyl-transfer RNA (tRNA) molecules. The large subunit (LSU) contains the ribosomal catalytic site termed the peptidyl transferase center (PTC), which catalyzes the formation of peptide bonds, thereby polymerizing the amino acids delivered by tRNAs into a polypeptide chain. The nascent polypeptides leave the ribosome through a tunnel in the LSU and interact with protein factors that function in enzymatic processing, targeting, and the membrane insertion of nascent chains at the exit of the ribosomal tunnel. This is Large ribosomal subunit protein eL31A from Saccharomyces cerevisiae (strain ATCC 204508 / S288c) (Baker's yeast).